The primary structure comprises 261 residues: Transmembrane protein 106A (261 aa).

The tract at residues 1-23 (MGKAVSQLTSRKDEDKPILPDNP) is disordered. The helical transmembrane segment at 93 to 113 (LFVFLSVAICLLIFSLTIFFL) threads the bilayer.

Belongs to the TMEM106 family. As to expression, expressed in liver, spleen, lung, kidney, lymph nodes and adipose tissue (at protein level). Expressed by macrophages.

It localises to the cell membrane. In terms of biological role, activates macrophages and polarizes them into M1-like macrophages through the activation of the MAPK and NF-kappaB signaling pathway. Upon activation, up-regulates the expression of CD80, CD86, CD69 and MHC II on macrophages, and induces the release of pro-inflammatory cytokines such as TNF, IL1B, IL6, CCL2 and nitric oxide. May play a role in inhibition of proliferation and migration. The chain is Transmembrane protein 106A (Tmem106a) from Mus musculus (Mouse).